The primary structure comprises 223 residues: Translation initiation factor 6 (223 aa).

The protein belongs to the eIF-6 family.

In terms of biological role, binds to the 50S ribosomal subunit and prevents its association with the 30S ribosomal subunit to form the 70S initiation complex. The chain is Translation initiation factor 6 from Saccharolobus islandicus (strain Y.N.15.51 / Yellowstone #2) (Sulfolobus islandicus).